A 194-amino-acid polypeptide reads, in one-letter code: MENYQLVLASTSPFRQQLLEKLAIPFSTLSPNCDETPLEDESPQQLVLRLAESKAQSCQINQPSLVIGSDQVCVINGNIVGKPHNRQNAIAQLTAQSGQSIVFYTGLAVYNSETGETRSCIDEFKVHFRPLTQAQIERYVDKEQPFYCAGSFKSEGLGIALFEKLEGKDPNTLVGLPLIDLIDLLAQQGMQVLG.

The active-site Proton acceptor is Asp70.

This sequence belongs to the Maf family. YceF subfamily. It depends on a divalent metal cation as a cofactor.

Its subcellular location is the cytoplasm. The enzyme catalyses N(7)-methyl-GTP + H2O = N(7)-methyl-GMP + diphosphate + H(+). Nucleoside triphosphate pyrophosphatase that hydrolyzes 7-methyl-GTP (m(7)GTP). May have a dual role in cell division arrest and in preventing the incorporation of modified nucleotides into cellular nucleic acids. This is 7-methyl-GTP pyrophosphatase from Vibrio vulnificus (strain YJ016).